Reading from the N-terminus, the 127-residue chain is Aspartate 1-decarboxylase (127 aa).

The active-site Schiff-base intermediate with substrate; via pyruvic acid is the Ser25. At Ser25 the chain carries Pyruvic acid (Ser). Substrate is bound at residue Thr57. The active-site Proton donor is the Tyr58. 73-75 (GAA) is a binding site for substrate.

Belongs to the PanD family. Heterooctamer of four alpha and four beta subunits. The cofactor is pyruvate. In terms of processing, is synthesized initially as an inactive proenzyme, which is activated by self-cleavage at a specific serine bond to produce a beta-subunit with a hydroxyl group at its C-terminus and an alpha-subunit with a pyruvoyl group at its N-terminus.

The protein localises to the cytoplasm. The enzyme catalyses L-aspartate + H(+) = beta-alanine + CO2. It participates in cofactor biosynthesis; (R)-pantothenate biosynthesis; beta-alanine from L-aspartate: step 1/1. Its function is as follows. Catalyzes the pyruvoyl-dependent decarboxylation of aspartate to produce beta-alanine. This is Aspartate 1-decarboxylase from Staphylococcus aureus (strain JH1).